Consider the following 87-residue polypeptide: CRISPR-associated endoribonuclease Cas2 (87 aa).

Asp-8 is a binding site for Mg(2+).

The protein belongs to the CRISPR-associated endoribonuclease Cas2 protein family. Homodimer, forms a heterotetramer with a Cas1 homodimer. It depends on Mg(2+) as a cofactor.

In terms of biological role, CRISPR (clustered regularly interspaced short palindromic repeat), is an adaptive immune system that provides protection against mobile genetic elements (viruses, transposable elements and conjugative plasmids). CRISPR clusters contain sequences complementary to antecedent mobile elements and target invading nucleic acids. CRISPR clusters are transcribed and processed into CRISPR RNA (crRNA). Functions as a ssRNA-specific endoribonuclease. Involved in the integration of spacer DNA into the CRISPR cassette. The polypeptide is CRISPR-associated endoribonuclease Cas2 (Dictyoglomus turgidum (strain DSM 6724 / Z-1310)).